Consider the following 311-residue polypeptide: tRNA-cytidine(32) 2-sulfurtransferase (311 aa).

The PP-loop motif motif lies at 47 to 52 (SGGKDS). Positions 122, 125, and 213 each coordinate [4Fe-4S] cluster.

The protein belongs to the TtcA family. As to quaternary structure, homodimer. The cofactor is Mg(2+). [4Fe-4S] cluster is required as a cofactor.

The protein resides in the cytoplasm. It catalyses the reaction cytidine(32) in tRNA + S-sulfanyl-L-cysteinyl-[cysteine desulfurase] + AH2 + ATP = 2-thiocytidine(32) in tRNA + L-cysteinyl-[cysteine desulfurase] + A + AMP + diphosphate + H(+). It participates in tRNA modification. In terms of biological role, catalyzes the ATP-dependent 2-thiolation of cytidine in position 32 of tRNA, to form 2-thiocytidine (s(2)C32). The sulfur atoms are provided by the cysteine/cysteine desulfurase (IscS) system. In Escherichia coli (strain 55989 / EAEC), this protein is tRNA-cytidine(32) 2-sulfurtransferase.